A 696-amino-acid polypeptide reads, in one-letter code: Elongation factor G (696 aa).

Residues 8-290 (ERYRNIGVMA…AVLDYLPSPA (283 aa)) form the tr-type G domain. Residues 17–24 (AHIDAGKT), 88–92 (DTPGH), and 142–145 (NKMD) each bind GTP.

It belongs to the TRAFAC class translation factor GTPase superfamily. Classic translation factor GTPase family. EF-G/EF-2 subfamily.

It localises to the cytoplasm. Its function is as follows. Catalyzes the GTP-dependent ribosomal translocation step during translation elongation. During this step, the ribosome changes from the pre-translocational (PRE) to the post-translocational (POST) state as the newly formed A-site-bound peptidyl-tRNA and P-site-bound deacylated tRNA move to the P and E sites, respectively. Catalyzes the coordinated movement of the two tRNA molecules, the mRNA and conformational changes in the ribosome. This is Elongation factor G from Nitrosospira multiformis (strain ATCC 25196 / NCIMB 11849 / C 71).